Consider the following 486-residue polypeptide: Membrane-bound lytic murein transglycosylase F (486 aa).

The N-terminal stretch at 1–28 (MFAHTLFRKRCAIWLLAIGIFLMLGSCA) is a signal peptide. The segment at 29-267 (EKPSELERIK…RLRERYYGHV (239 aa)) is non-LT domain. Residues 268-486 (DVLGYVGAYA…TDLMEELPPL (219 aa)) are LT domain. Residue Glu-314 is part of the active site.

This sequence in the N-terminal section; belongs to the bacterial solute-binding protein 3 family. In the C-terminal section; belongs to the transglycosylase Slt family.

Its subcellular location is the cell outer membrane. The enzyme catalyses Exolytic cleavage of the (1-&gt;4)-beta-glycosidic linkage between N-acetylmuramic acid (MurNAc) and N-acetylglucosamine (GlcNAc) residues in peptidoglycan, from either the reducing or the non-reducing ends of the peptidoglycan chains, with concomitant formation of a 1,6-anhydrobond in the MurNAc residue.. Functionally, murein-degrading enzyme that degrades murein glycan strands and insoluble, high-molecular weight murein sacculi, with the concomitant formation of a 1,6-anhydromuramoyl product. Lytic transglycosylases (LTs) play an integral role in the metabolism of the peptidoglycan (PG) sacculus. Their lytic action creates space within the PG sacculus to allow for its expansion as well as for the insertion of various structures such as secretion systems and flagella. This Stutzerimonas stutzeri (strain A1501) (Pseudomonas stutzeri) protein is Membrane-bound lytic murein transglycosylase F.